The following is a 289-amino-acid chain: Pantothenate synthetase (289 aa).

33 to 40 (MGYLHEGH) is a binding site for ATP. Residue His-40 is the Proton donor of the active site. Position 70 (Gln-70) interacts with (R)-pantoate. Beta-alanine is bound at residue Gln-70. 157-160 (GEKD) provides a ligand contact to ATP. Gln-163 provides a ligand contact to (R)-pantoate. ATP-binding positions include Val-186 and 194–197 (LSSR).

It belongs to the pantothenate synthetase family. In terms of assembly, homodimer.

Its subcellular location is the cytoplasm. It catalyses the reaction (R)-pantoate + beta-alanine + ATP = (R)-pantothenate + AMP + diphosphate + H(+). Its pathway is cofactor biosynthesis; (R)-pantothenate biosynthesis; (R)-pantothenate from (R)-pantoate and beta-alanine: step 1/1. Its function is as follows. Catalyzes the condensation of pantoate with beta-alanine in an ATP-dependent reaction via a pantoyl-adenylate intermediate. The chain is Pantothenate synthetase from Anaeromyxobacter dehalogenans (strain 2CP-C).